A 425-amino-acid polypeptide reads, in one-letter code: CinA-like protein (425 aa).

The protein belongs to the CinA family.

In Shewanella sp. (strain ANA-3), this protein is CinA-like protein.